The following is a 997-amino-acid chain: P3N-PIPO polyprotein (997 aa).

Positions 173–313 constitute a Peptidase S30 domain; the sequence is IVCVDDVNNL…VLFYSDVEHY (141 aa). Residues Glu-235 and Ser-267 each act as for P1 proteinase activity in the active site. Positions 365–368 match the Involved in interaction with stylet and aphid transmission motif; the sequence is KLSC. The Involved in virions binding and aphid transmission signature appears at 621 to 623; the sequence is PTK. In terms of domain architecture, Peptidase C6 spans 647–769; the sequence is MYIAKEGYCY…QSEMKHYRVG (123 aa). Residues Cys-655 and His-728 each act as for helper component proteinase activity in the active site.

Belongs to the potyviridae P3N-PIPO polyprotein family. As to quaternary structure, interacts (via PIPO domain) with host PCaP1 protein; this interaction may help to anchor the movement complex to the plasma membrane from which the complex could move to the plasmodesmata. In terms of processing, potyviral RNA is expressed as two polyproteins which undergo post-translational proteolytic processing. Genome polyprotein is processed by NIa-pro, P1 and HC-pro proteinases resulting in the production of at least ten individual proteins. P3N-PIPO is cleaved by P1 and HC-pro proteinases resulting in the production of three individual proteins. The P1 proteinase and the HC-pro cleave only their respective C-termini autocatalytically.

It is found in the host cell junction. The protein resides in the host plasmodesma. It carries out the reaction Hydrolyzes a Gly-|-Gly bond at its own C-terminus, commonly in the sequence -Tyr-Xaa-Val-Gly-|-Gly, in the processing of the potyviral polyprotein.. Functionally, required for aphid transmission and also has proteolytic activity. Only cleaves a Gly-Gly dipeptide at its own C-terminus. Interacts with virions and aphid stylets. Acts as a suppressor of RNA-mediated gene silencing, also known as post-transcriptional gene silencing (PTGS), a mechanism of plant viral defense that limits the accumulation of viral RNAs. May have RNA-binding activity. In terms of biological role, allows efficient cell to cell propagation, by bypassing the host cell wall barrier. Transports viral genome to neighboring plant cells directly through plasmosdesmata, without any budding. The protein is P3N-PIPO polyprotein of Citrullus lanatus (Watermelon).